The sequence spans 240 residues: Transcriptional regulatory protein BaeR (240 aa).

Residues 12 to 125 enclose the Response regulatory domain; that stretch reads RILIVEDEPK…EVVARVKTIL (114 aa). Position 61 is a 4-aspartylphosphate (D61). A DNA-binding region (ompR/PhoB-type) is located at residues 131-234; the sequence is QRELQQQDAE…VYGVGYRWEA (104 aa).

Phosphorylated by BaeS.

Its subcellular location is the cytoplasm. Functionally, member of the two-component regulatory system BaeS/BaeR. Activates the mdtABCD operon. In Escherichia coli O6:H1 (strain CFT073 / ATCC 700928 / UPEC), this protein is Transcriptional regulatory protein BaeR (baeR).